A 264-amino-acid polypeptide reads, in one-letter code: Large ribosomal subunit protein mL50 (264 aa).

Residues 1–75 constitute a mitochondrion transit peptide; it reads MSSLLKLHCI…EEGTNEASSQ (75 aa).

The protein belongs to the mitochondrion-specific ribosomal protein mL50 family. Component of the mitochondrial large ribosomal subunit (mt-LSU). Mature yeast 74S mitochondrial ribosomes consist of a small (37S) and a large (54S) subunit. The 37S small subunit contains a 15S ribosomal RNA (15S mt-rRNA) and 34 different proteins. The 54S large subunit contains a 21S rRNA (21S mt-rRNA) and 46 different proteins.

The protein resides in the mitochondrion. In terms of biological role, component of the mitochondrial ribosome (mitoribosome), a dedicated translation machinery responsible for the synthesis of mitochondrial genome-encoded proteins, including at least some of the essential transmembrane subunits of the mitochondrial respiratory chain. The mitoribosomes are attached to the mitochondrial inner membrane and translation products are cotranslationally integrated into the membrane. The chain is Large ribosomal subunit protein mL50 (MRPL13) from Saccharomyces cerevisiae (strain ATCC 204508 / S288c) (Baker's yeast).